The sequence spans 497 residues: Cysteine--tRNA ligase (497 aa).

Residue Cys-32 coordinates Zn(2+). The 'HIGH' region motif lies at 34–44; sequence PTVYGEGHLGH. Residues Cys-228, His-253, and Glu-257 each coordinate Zn(2+). A 'KMSKS' region motif is present at residues 285-289; the sequence is KMGKS. Lys-288 contributes to the ATP binding site.

This sequence belongs to the class-I aminoacyl-tRNA synthetase family. In terms of assembly, monomer. The cofactor is Zn(2+).

The protein resides in the cytoplasm. The enzyme catalyses tRNA(Cys) + L-cysteine + ATP = L-cysteinyl-tRNA(Cys) + AMP + diphosphate. The polypeptide is Cysteine--tRNA ligase (Cytophaga hutchinsonii (strain ATCC 33406 / DSM 1761 / CIP 103989 / NBRC 15051 / NCIMB 9469 / D465)).